Reading from the N-terminus, the 51-residue chain is Insulin (51 aa).

Disulfide bonds link Cys-7-Cys-37, Cys-19-Cys-50, and Cys-36-Cys-41.

This sequence belongs to the insulin family. In terms of assembly, heterodimer of a B chain and an A chain linked by two disulfide bonds.

Its subcellular location is the secreted. Functionally, insulin decreases blood glucose concentration. It increases cell permeability to monosaccharides, amino acids and fatty acids. It accelerates glycolysis, the pentose phosphate cycle, and glycogen synthesis in liver. This chain is Insulin (INS), found in Alligator mississippiensis (American alligator).